The chain runs to 385 residues: 1-deoxy-D-xylulose 5-phosphate reductoisomerase (385 aa).

6 residues coordinate NADPH: threonine 13, glycine 14, serine 15, isoleucine 16, asparagine 40, and asparagine 122. Residue lysine 123 coordinates 1-deoxy-D-xylulose 5-phosphate. Residue glutamate 124 participates in NADPH binding. Aspartate 148 is a Mn(2+) binding site. 1-deoxy-D-xylulose 5-phosphate is bound by residues serine 149, glutamate 150, serine 177, and histidine 200. Glutamate 150 contacts Mn(2+). Glycine 206 contributes to the NADPH binding site. 1-deoxy-D-xylulose 5-phosphate is bound by residues serine 213, asparagine 218, lysine 219, and glutamate 222. Glutamate 222 contributes to the Mn(2+) binding site.

This sequence belongs to the DXR family. Mg(2+) serves as cofactor. Requires Mn(2+) as cofactor.

It carries out the reaction 2-C-methyl-D-erythritol 4-phosphate + NADP(+) = 1-deoxy-D-xylulose 5-phosphate + NADPH + H(+). It functions in the pathway isoprenoid biosynthesis; isopentenyl diphosphate biosynthesis via DXP pathway; isopentenyl diphosphate from 1-deoxy-D-xylulose 5-phosphate: step 1/6. Catalyzes the NADPH-dependent rearrangement and reduction of 1-deoxy-D-xylulose-5-phosphate (DXP) to 2-C-methyl-D-erythritol 4-phosphate (MEP). The sequence is that of 1-deoxy-D-xylulose 5-phosphate reductoisomerase from Francisella tularensis subsp. tularensis (strain WY96-3418).